The primary structure comprises 591 residues: Aspartate--tRNA ligase (591 aa).

L-aspartate is bound at residue glutamate 172. The segment at 196–199 (QLFK) is aspartate. Residue arginine 218 participates in L-aspartate binding. ATP contacts are provided by residues 218–220 (RDE) and glutamine 227. Residue histidine 449 participates in L-aspartate binding. Position 483 (glutamate 483) interacts with ATP. Arginine 490 lines the L-aspartate pocket. 535–538 (GLDR) contributes to the ATP binding site.

The protein belongs to the class-II aminoacyl-tRNA synthetase family. Type 1 subfamily. Homodimer.

Its subcellular location is the cytoplasm. It carries out the reaction tRNA(Asp) + L-aspartate + ATP = L-aspartyl-tRNA(Asp) + AMP + diphosphate. Its function is as follows. Catalyzes the attachment of L-aspartate to tRNA(Asp) in a two-step reaction: L-aspartate is first activated by ATP to form Asp-AMP and then transferred to the acceptor end of tRNA(Asp). The sequence is that of Aspartate--tRNA ligase from Actinobacillus pleuropneumoniae serotype 7 (strain AP76).